A 130-amino-acid polypeptide reads, in one-letter code: Ribosome-binding factor A (130 aa).

This sequence belongs to the RbfA family. Monomer. Binds 30S ribosomal subunits, but not 50S ribosomal subunits or 70S ribosomes.

Its subcellular location is the cytoplasm. In terms of biological role, one of several proteins that assist in the late maturation steps of the functional core of the 30S ribosomal subunit. Associates with free 30S ribosomal subunits (but not with 30S subunits that are part of 70S ribosomes or polysomes). Required for efficient processing of 16S rRNA. May interact with the 5'-terminal helix region of 16S rRNA. The sequence is that of Ribosome-binding factor A from Prochlorococcus marinus (strain SARG / CCMP1375 / SS120).